Consider the following 91-residue polypeptide: Sec-independent protein translocase protein TatA (91 aa).

A helical transmembrane segment spans residues 1 to 21 (MGIFDWKHWIVILIVVVLVFG). A disordered region spans residues 41–91 (KAMNDDDKPAEQPAPQPQQAQPAPQGSPLNQPHTIDAQAHKVDEPIRKDQV). The segment covering 51 to 64 (EQPAPQPQQAQPAP) has biased composition (low complexity). Residues 78–91 (QAHKVDEPIRKDQV) are compositionally biased toward basic and acidic residues.

The protein belongs to the TatA/E family. In terms of assembly, the Tat system comprises two distinct complexes: a TatABC complex, containing multiple copies of TatA, TatB and TatC subunits, and a separate TatA complex, containing only TatA subunits. Substrates initially bind to the TatABC complex, which probably triggers association of the separate TatA complex to form the active translocon.

The protein resides in the cell inner membrane. Functionally, part of the twin-arginine translocation (Tat) system that transports large folded proteins containing a characteristic twin-arginine motif in their signal peptide across membranes. TatA could form the protein-conducting channel of the Tat system. The sequence is that of Sec-independent protein translocase protein TatA from Pseudomonas syringae pv. syringae (strain B728a).